A 247-amino-acid polypeptide reads, in one-letter code: 1-(5-phosphoribosyl)-5-[(5-phosphoribosylamino)methylideneamino] imidazole-4-carboxamide isomerase 1 (247 aa).

E8 functions as the Proton acceptor in the catalytic mechanism. D128 functions as the Proton donor in the catalytic mechanism.

The protein belongs to the HisA/HisF family.

The protein localises to the cytoplasm. It carries out the reaction 1-(5-phospho-beta-D-ribosyl)-5-[(5-phospho-beta-D-ribosylamino)methylideneamino]imidazole-4-carboxamide = 5-[(5-phospho-1-deoxy-D-ribulos-1-ylimino)methylamino]-1-(5-phospho-beta-D-ribosyl)imidazole-4-carboxamide. The protein operates within amino-acid biosynthesis; L-histidine biosynthesis; L-histidine from 5-phospho-alpha-D-ribose 1-diphosphate: step 4/9. The sequence is that of 1-(5-phosphoribosyl)-5-[(5-phosphoribosylamino)methylideneamino] imidazole-4-carboxamide isomerase 1 from Ruegeria sp. (strain TM1040) (Silicibacter sp.).